The primary structure comprises 444 residues: N-succinylarginine dihydrolase (444 aa).

Substrate contacts are provided by residues 19-28 (AGLSFGNVAS), asparagine 110, and 137-138 (HR). The active site involves glutamate 174. Arginine 214 contributes to the substrate binding site. Histidine 250 is an active-site residue. Residues aspartate 252 and asparagine 362 each coordinate substrate. The active-site Nucleophile is cysteine 368.

This sequence belongs to the succinylarginine dihydrolase family. As to quaternary structure, homodimer.

It catalyses the reaction N(2)-succinyl-L-arginine + 2 H2O + 2 H(+) = N(2)-succinyl-L-ornithine + 2 NH4(+) + CO2. It participates in amino-acid degradation; L-arginine degradation via AST pathway; L-glutamate and succinate from L-arginine: step 2/5. In terms of biological role, catalyzes the hydrolysis of N(2)-succinylarginine into N(2)-succinylornithine, ammonia and CO(2). In Shewanella frigidimarina (strain NCIMB 400), this protein is N-succinylarginine dihydrolase.